The following is a 331-amino-acid chain: GTP 3',8-cyclase (331 aa).

In terms of domain architecture, Radical SAM core spans 1 to 231 (MNAVDYLRIS…DGQVQGNGPA (231 aa)). GTP is bound at residue Arg-8. [4Fe-4S] cluster is bound by residues Cys-15 and Cys-19. Tyr-21 is a binding site for S-adenosyl-L-methionine. Cys-22 lines the [4Fe-4S] cluster pocket. Residue Arg-60 coordinates GTP. S-adenosyl-L-methionine is bound at residue Gly-64. Residue Thr-91 participates in GTP binding. Ser-115 is an S-adenosyl-L-methionine binding site. Lys-157 provides a ligand contact to GTP. An S-adenosyl-L-methionine-binding site is contributed by Met-191. The [4Fe-4S] cluster site is built by Cys-254 and Cys-257. 259-261 (RMR) contributes to the GTP binding site. Cys-271 is a binding site for [4Fe-4S] cluster.

This sequence belongs to the radical SAM superfamily. MoaA family. Monomer and homodimer. The cofactor is [4Fe-4S] cluster.

It carries out the reaction GTP + AH2 + S-adenosyl-L-methionine = (8S)-3',8-cyclo-7,8-dihydroguanosine 5'-triphosphate + 5'-deoxyadenosine + L-methionine + A + H(+). It functions in the pathway cofactor biosynthesis; molybdopterin biosynthesis. Catalyzes the cyclization of GTP to (8S)-3',8-cyclo-7,8-dihydroguanosine 5'-triphosphate. The protein is GTP 3',8-cyclase of Acaryochloris marina (strain MBIC 11017).